The primary structure comprises 136 residues: Transport protein particle 20 kDa subunit (136 aa).

The protein belongs to the TRAPP small subunits family. Sedlin subfamily.

The protein localises to the cytoplasm. It is found in the golgi apparatus. The protein resides in the cis-Golgi network. It localises to the endoplasmic reticulum. In terms of biological role, component of the TRAPP I and TRAPP II complexes. TRAPP I plays a key role in the late stages of endoplasmic reticulum to Golgi traffic. TRAPP II seems to play a role in intra-Golgi transport. This chain is Transport protein particle 20 kDa subunit (trs20), found in Schizosaccharomyces pombe (strain 972 / ATCC 24843) (Fission yeast).